Consider the following 548-residue polypeptide: SH2B adapter protein 3 (548 aa).

Residues 1–11 (MNEPTVQPSRT) are compositionally biased toward polar residues. Disordered regions lie at residues 1–25 (MNEP…RGWS), 78–108 (SLAG…DLGP), and 128–160 (RSAG…LLPW). Residues 12–21 (SSAPASPASP) are compositionally biased toward low complexity. Phosphoserine occurs at positions 13, 102, and 129. Polar residues predominate over residues 137 to 148 (TSDTNDIDTTAA). The 112-residue stretch at 168 to 279 (EALKEVVLRY…WLAELRASTG (112 aa)) folds into the PH domain. The disordered stretch occupies residues 290–313 (PLSLAAEPGPARSPRGSTDSLDQG). Phosphoserine is present on Ser-302. The SH2 domain maps to 336–434 (WFHGPISRVR…ACDVRLSGYV (99 aa)).

Belongs to the SH2B adapter family. In terms of processing, tyrosine phosphorylated.

Links T-cell receptor activation signal to phospholipase C-gamma-1, GRB2 and phosphatidylinositol 3-kinase. The chain is SH2B adapter protein 3 (Sh2b3) from Mus musculus (Mouse).